Here is a 391-residue protein sequence, read N- to C-terminus: Serine acetyltransferase 3, mitochondrial (391 aa).

2 disordered regions span residues 40 to 82 and 353 to 375; these read KHHT…HDDE and VGNP…IPGL. Over residues 45-56 the composition is skewed to pro residues; that stretch reads SPPPSPPPPPPM.

It belongs to the transferase hexapeptide repeat family. Homomultimer. Interacts with OASC. Component of the cysteine synthase complex (CSC) composed of two OAS-TL dimers and one SAT hexamer. In terms of tissue distribution, ubiquitous with higher levels in leaves and siliques. Localized in vascular tissues, particularly in phloem.

The protein localises to the mitochondrion. It carries out the reaction L-serine + acetyl-CoA = O-acetyl-L-serine + CoA. Its pathway is amino-acid biosynthesis; L-cysteine biosynthesis; L-cysteine from L-serine: step 1/2. The chain is Serine acetyltransferase 3, mitochondrial (SAT3) from Arabidopsis thaliana (Mouse-ear cress).